Consider the following 293-residue polypeptide: Ribosomal protein L11 methyltransferase (293 aa).

S-adenosyl-L-methionine is bound by residues threonine 145, glycine 166, aspartate 188, and asparagine 230.

Belongs to the methyltransferase superfamily. PrmA family.

The protein localises to the cytoplasm. It catalyses the reaction L-lysyl-[protein] + 3 S-adenosyl-L-methionine = N(6),N(6),N(6)-trimethyl-L-lysyl-[protein] + 3 S-adenosyl-L-homocysteine + 3 H(+). Functionally, methylates ribosomal protein L11. In Shewanella baltica (strain OS195), this protein is Ribosomal protein L11 methyltransferase.